Reading from the N-terminus, the 296-residue chain is 4-diphosphocytidyl-2-C-methyl-D-erythritol kinase (296 aa).

Residue Lys11 is part of the active site. An ATP-binding site is contributed by 95 to 105 (PVAAGMAGGSS). Asp137 is a catalytic residue.

Belongs to the GHMP kinase family. IspE subfamily.

It carries out the reaction 4-CDP-2-C-methyl-D-erythritol + ATP = 4-CDP-2-C-methyl-D-erythritol 2-phosphate + ADP + H(+). The protein operates within isoprenoid biosynthesis; isopentenyl diphosphate biosynthesis via DXP pathway; isopentenyl diphosphate from 1-deoxy-D-xylulose 5-phosphate: step 3/6. Its function is as follows. Catalyzes the phosphorylation of the position 2 hydroxy group of 4-diphosphocytidyl-2C-methyl-D-erythritol. The sequence is that of 4-diphosphocytidyl-2-C-methyl-D-erythritol kinase from Clostridioides difficile (strain 630) (Peptoclostridium difficile).